The sequence spans 253 residues: 2-C-methyl-D-erythritol 4-phosphate cytidylyltransferase (253 aa).

Belongs to the IspD/TarI cytidylyltransferase family. IspD subfamily.

The catalysed reaction is 2-C-methyl-D-erythritol 4-phosphate + CTP + H(+) = 4-CDP-2-C-methyl-D-erythritol + diphosphate. Its pathway is isoprenoid biosynthesis; isopentenyl diphosphate biosynthesis via DXP pathway; isopentenyl diphosphate from 1-deoxy-D-xylulose 5-phosphate: step 2/6. Its function is as follows. Catalyzes the formation of 4-diphosphocytidyl-2-C-methyl-D-erythritol from CTP and 2-C-methyl-D-erythritol 4-phosphate (MEP). The chain is 2-C-methyl-D-erythritol 4-phosphate cytidylyltransferase from Chlorobium chlorochromatii (strain CaD3).